The primary structure comprises 500 residues: Tektin-like protein 1 (500 aa).

Residues 1 to 25 are disordered; the sequence is MPVLLPSTDRDQDSRVGAPEWHQAA. The residue at position 14 (Ser14) is a Phosphoserine. Residues 198–229 adopt a coiled-coil conformation; the sequence is MLVWEREELKSMKRKMEKDMERSEALLKALAS. Positions 265–286 are disordered; the sequence is VDITRPPTPRTQGLKTPPPDPV. At Tyr372 the chain carries Phosphotyrosine. A coiled-coil region spans residues 422 to 448; the sequence is LTRHNLQMEKNLKELRTTHDNLAWSLN.

As to quaternary structure, microtubule inner protein component of sperm flagellar doublet microtubules.

Its subcellular location is the cytoplasm. The protein localises to the cytoskeleton. It localises to the flagellum axoneme. Its function is as follows. Microtubule inner protein (MIP) part of the dynein-decorated doublet microtubules (DMTs) in sperm flagellar axoneme, which is required for motile flagellum beating. Forms an extensive interaction network cross-linking the lumen of axonemal doublet microtubules. In Rattus norvegicus (Rat), this protein is Tektin-like protein 1.